A 289-amino-acid chain; its full sequence is ATP synthase gamma chain (289 aa).

It belongs to the ATPase gamma chain family. As to quaternary structure, F-type ATPases have 2 components, CF(1) - the catalytic core - and CF(0) - the membrane proton channel. CF(1) has five subunits: alpha(3), beta(3), gamma(1), delta(1), epsilon(1). CF(0) has three main subunits: a, b and c.

It localises to the cell inner membrane. Its function is as follows. Produces ATP from ADP in the presence of a proton gradient across the membrane. The gamma chain is believed to be important in regulating ATPase activity and the flow of protons through the CF(0) complex. The polypeptide is ATP synthase gamma chain (Cereibacter sphaeroides (strain ATCC 17029 / ATH 2.4.9) (Rhodobacter sphaeroides)).